Here is a 151-residue protein sequence, read N- to C-terminus: Snaclec 3 (151 aa).

A signal peptide spans 1 to 23 (MGRLVFVSFSLLVVFLSLSGTAA). 3 cysteine pairs are disulfide-bonded: C25/C36, C53/C149, and C125/C141. The region spanning 32 to 150 (YEGHCYKPFN…CGEINPFVCK (119 aa)) is the C-type lectin domain.

Belongs to the snaclec family. As to quaternary structure, heterodimer; disulfide-linked. In terms of tissue distribution, expressed by the venom gland.

It is found in the secreted. Functionally, interferes with one step of hemostasis (modulation of platelet aggregation, or coagulation cascade, for example). This Sistrurus catenatus edwardsii (Desert massasauga) protein is Snaclec 3.